Reading from the N-terminus, the 107-residue chain is UPF0145 protein YbjQ (107 aa).

Belongs to the UPF0145 family.

This chain is UPF0145 protein YbjQ, found in Salmonella gallinarum (strain 287/91 / NCTC 13346).